Reading from the N-terminus, the 295-residue chain is Sulfotransferase 1E1 (295 aa).

A 3'-phosphoadenylyl sulfate-binding site is contributed by 48 to 53 (KSGTTW). 106–108 (KTH) provides a ligand contact to substrate. Residue His108 is the Proton acceptor of the active site. 3'-phosphoadenylyl sulfate-binding residues include Arg130 and Ser138. Ser156 is modified (phosphoserine). Residues Tyr193, 227-232 (TSFQEM), and 257-259 (RKG) contribute to the 3'-phosphoadenylyl sulfate site.

It belongs to the sulfotransferase 1 family. In terms of assembly, homodimer. Testis and at very low level in the placenta.

The protein resides in the cytoplasm. The protein localises to the cytosol. The enzyme catalyses estrone + 3'-phosphoadenylyl sulfate = estrone 3-sulfate + adenosine 3',5'-bisphosphate + H(+). It catalyses the reaction 17beta-estradiol + 3'-phosphoadenylyl sulfate = 17beta-estradiol 3-sulfate + adenosine 3',5'-bisphosphate + H(+). The catalysed reaction is (24S)-hydroxycholesterol + 3'-phosphoadenylyl sulfate = (24S)-hydroxycholesterol 3-sulfate + adenosine 3',5'-bisphosphate + H(+). It carries out the reaction 3beta-hydroxyandrost-5-en-17-one + 3'-phosphoadenylyl sulfate = dehydroepiandrosterone 3-sulfate + adenosine 3',5'-bisphosphate + H(+). The enzyme catalyses 4-ethylphenol + 3'-phosphoadenylyl sulfate = 4-ethylphenyl sulfate + adenosine 3',5'-bisphosphate + H(+). With respect to regulation, inhibited by estradiol. Its function is as follows. Sulfotransferase that utilizes 3'-phospho-5'-adenylyl sulfate (PAPS) as sulfonate donor to catalyze the sulfate conjugation of estradiol and estrone. Is a key enzyme in estrogen homeostasis, the sulfation of estrogens leads to their inactivation. Also sulfates dehydroepiandrosterone, pregnenolone, (24S)-hydroxycholesterol and xenobiotic compounds like ethinylestradiol, equalenin, diethyl stilbesterol and 1-naphthol at significantly lower efficiency. Does not sulfonate cortisol, testosterone and dopamine. May play a role in gut microbiota-host metabolic interaction. O-sulfonates 4-ethylphenol (4-EP), a dietary tyrosine-derived metabolite produced by gut bacteria. The product 4-EPS crosses the blood-brain barrier and may negatively regulate oligodendrocyte maturation and myelination, affecting the functional connectivity of different brain regions associated with the limbic system. This chain is Sulfotransferase 1E1 (Sult1e1), found in Mus musculus (Mouse).